We begin with the raw amino-acid sequence, 422 residues long: Osteomodulin (422 aa).

A signal peptide spans Met1–Cys20. A propeptide spanning residues Gln21–Trp27 is cleaved from the precursor. Sulfotyrosine is present on residues Tyr22, Tyr25, Tyr31, Tyr39, Tyr51, and Tyr77. In terms of domain architecture, LRRNT spans Ala53–Ala91. LRR repeat units lie at residues His92–Asn113, His116–Ser129, Asn142–Leu164, Glu165–Gly184, Asn187–Val207, Lys213–Ser233, Ser234–Lys255, Lys258–Ser280, Asn281–Gln294, Asn301–Pro322, and His331–Cys353. 2 N-linked (GlcNAc...) asparagine glycosylation sites follow: Asn113 and Asn121. An N-linked (GlcNAc...) asparagine glycan is attached at Asn187. N-linked (GlcNAc...) asparagine glycans are attached at residues Asn242 and Asn278. Asn316 is a glycosylation site (N-linked (GlcNAc...) asparagine). Cys321 and Cys353 are joined by a disulfide. Residues Asp385–Ile422 form a disordered region. Sulfotyrosine occurs at positions 412 and 413.

It belongs to the small leucine-rich proteoglycan (SLRP) family. SLRP class II subfamily. In terms of assembly, binds the alpha(V)beta(3)-integrin. In terms of processing, the N-terminus is blocked. Glycosylated; contains keratan sulfate. Post-translationally, sulfated on tyrosine residue(s). As to expression, bone specific (at protein level).

The protein localises to the secreted. The protein resides in the extracellular space. It localises to the extracellular matrix. Its function is as follows. May be implicated in biomineralization processes. Has a function in binding of osteoblasts via the alpha(V)beta(3)-integrin. This chain is Osteomodulin (OMD), found in Bos taurus (Bovine).